A 587-amino-acid polypeptide reads, in one-letter code: 2-succinyl-5-enolpyruvyl-6-hydroxy-3-cyclohexene-1-carboxylate synthase (587 aa).

This sequence belongs to the TPP enzyme family. MenD subfamily. Homodimer. It depends on Mg(2+) as a cofactor. Mn(2+) serves as cofactor. Requires thiamine diphosphate as cofactor.

It catalyses the reaction isochorismate + 2-oxoglutarate + H(+) = 5-enolpyruvoyl-6-hydroxy-2-succinyl-cyclohex-3-ene-1-carboxylate + CO2. Its pathway is quinol/quinone metabolism; 1,4-dihydroxy-2-naphthoate biosynthesis; 1,4-dihydroxy-2-naphthoate from chorismate: step 2/7. It functions in the pathway cofactor biosynthesis; phylloquinone biosynthesis. Functionally, catalyzes the thiamine diphosphate-dependent decarboxylation of 2-oxoglutarate and the subsequent addition of the resulting succinic semialdehyde-thiamine pyrophosphate anion to isochorismate to yield 2-succinyl-5-enolpyruvyl-6-hydroxy-3-cyclohexene-1-carboxylate (SEPHCHC). This Prochlorococcus marinus (strain MIT 9215) protein is 2-succinyl-5-enolpyruvyl-6-hydroxy-3-cyclohexene-1-carboxylate synthase.